The chain runs to 513 residues: Glutamate--tRNA ligase 2 (513 aa).

The 'HIGH' region signature appears at 11–21; sequence PSPTGFLHIGS. The 'KMSKS' region signature appears at 240–244; the sequence is KLSKR. Lys243 provides a ligand contact to ATP. Positions 335 to 383 constitute an RPE1 insert domain; sequence NTLLRHLPYREEFGGNTERSTAAYIDIREDASTGLTYKLPLAVELPKKF.

It belongs to the class-I aminoacyl-tRNA synthetase family. Glutamate--tRNA ligase type 1 subfamily. In terms of assembly, monomer.

The protein resides in the cytoplasm. It carries out the reaction tRNA(Glu) + L-glutamate + ATP = L-glutamyl-tRNA(Glu) + AMP + diphosphate. Functionally, catalyzes the attachment of glutamate to tRNA(Glu) in a two-step reaction: glutamate is first activated by ATP to form Glu-AMP and then transferred to the acceptor end of tRNA(Glu). The sequence is that of Glutamate--tRNA ligase 2 from Rickettsia conorii (strain ATCC VR-613 / Malish 7).